A 719-amino-acid chain; its full sequence is Ribosomal RNA large subunit methyltransferase K/L (719 aa).

The region spanning 43 to 154 is the THUMP domain; sequence TQYRVLLWTR…REELVISLDL (112 aa).

It belongs to the methyltransferase superfamily. RlmKL family.

The protein resides in the cytoplasm. It catalyses the reaction guanosine(2445) in 23S rRNA + S-adenosyl-L-methionine = N(2)-methylguanosine(2445) in 23S rRNA + S-adenosyl-L-homocysteine + H(+). It carries out the reaction guanosine(2069) in 23S rRNA + S-adenosyl-L-methionine = N(2)-methylguanosine(2069) in 23S rRNA + S-adenosyl-L-homocysteine + H(+). Specifically methylates the guanine in position 2445 (m2G2445) and the guanine in position 2069 (m7G2069) of 23S rRNA. The sequence is that of Ribosomal RNA large subunit methyltransferase K/L from Pasteurella multocida (strain Pm70).